A 379-amino-acid chain; its full sequence is Protein COS2 (379 aa).

The Cytoplasmic portion of the chain corresponds to 1–72; sequence MKENELKNEK…WKLSNNCIYP (72 aa). A helical transmembrane segment spans residues 73–93; the sequence is LIVSLLVLFLGPIFVLVICGL. Over 94–254 the chain is Extracellular; that stretch reads SRKRSLSKQL…FLCCIYVSRG (161 aa). The chain crosses the membrane as a helical span at residues 255–275; it reads MCLLLRTLYLGWILFMLVQGF. Residues 276-379 lie on the Cytoplasmic side of the membrane; that stretch reads QNIRVLIMSM…QLSRSEVLLV (104 aa).

Belongs to the DUP/COS family.

The protein resides in the membrane. The chain is Protein COS2 (COS2) from Saccharomyces cerevisiae (strain ATCC 204508 / S288c) (Baker's yeast).